The following is a 260-amino-acid chain: Thrombin-like enzyme acutobin (260 aa).

An N-terminal signal peptide occupies residues 1-18 (MVLIRVLANLLILQLSYA). Positions 19–24 (QKSSEL) are excised as a propeptide. Residues 25–251 (VIGGVECDIN…YNDWIRSITA (227 aa)) form the Peptidase S1 domain. Disulfide bonds link cysteine 31/cysteine 165, cysteine 52/cysteine 68, cysteine 102/cysteine 258, cysteine 144/cysteine 212, cysteine 176/cysteine 191, and cysteine 202/cysteine 227. Histidine 67 (charge relay system) is an active-site residue. Asparagine 101 and asparagine 105 each carry an N-linked (GlcNAc...) asparagine glycan. Aspartate 112 functions as the Charge relay system in the catalytic mechanism. Residue asparagine 124 is glycosylated (N-linked (GlcNAc...) asparagine). Serine 206 (charge relay system) is an active-site residue. Asparagine 253 carries an N-linked (GlcNAc...) asparagine glycan.

Belongs to the peptidase S1 family. Snake venom subfamily. Monomer. Post-translationally, N-glycosylated. Expressed by the venom gland.

The protein resides in the secreted. Its function is as follows. Thrombin-like snake venom serine protease that coagulates human fibrinogen by hydrolysis of the alpha chains (FGA). This chain is Thrombin-like enzyme acutobin, found in Deinagkistrodon acutus (Hundred-pace snake).